Here is a 210-residue protein sequence, read N- to C-terminus: GEM-like protein 7 (210 aa).

The 79-residue stretch at 88 to 166 (KIYKRLFKVC…CKINGVNQSQ (79 aa)) folds into the GRAM domain.

This sequence belongs to the GEM family.

This is GEM-like protein 7 from Arabidopsis thaliana (Mouse-ear cress).